The chain runs to 95 residues: Putative monooxygenase YcnE (95 aa).

Positions 2–93 constitute an ABM domain; it reads IVLQAYIKVK…APLDVVRTEL (92 aa). Ser24 bears the Phosphoserine mark.

The protein belongs to the LsrG family.

In terms of biological role, putative monooxygenase that may contribute to the degradation of aromatic compounds. This Bacillus subtilis (strain 168) protein is Putative monooxygenase YcnE (ycnE).